Consider the following 198-residue polypeptide: Protein GrpE (198 aa).

The interval 1-32 (MTTEKETATPADVEVASQEEQIDQTTEAQVEE) is disordered.

The protein belongs to the GrpE family. As to quaternary structure, homodimer.

The protein resides in the cytoplasm. Participates actively in the response to hyperosmotic and heat shock by preventing the aggregation of stress-denatured proteins, in association with DnaK and GrpE. It is the nucleotide exchange factor for DnaK and may function as a thermosensor. Unfolded proteins bind initially to DnaJ; upon interaction with the DnaJ-bound protein, DnaK hydrolyzes its bound ATP, resulting in the formation of a stable complex. GrpE releases ADP from DnaK; ATP binding to DnaK triggers the release of the substrate protein, thus completing the reaction cycle. Several rounds of ATP-dependent interactions between DnaJ, DnaK and GrpE are required for fully efficient folding. This Haemophilus ducreyi (strain 35000HP / ATCC 700724) protein is Protein GrpE.